Here is a 228-residue protein sequence, read N- to C-terminus: Death domain-containing membrane protein NRADD (228 aa).

The Extracellular portion of the chain corresponds to 1 to 52 (MLHNVSKGVVYSDTALKGQDGDREGMWVGAGGALAPNTSSLFPPEPPGASSN). N-linked (GlcNAc...) asparagine glycosylation is found at asparagine 4 and asparagine 37. A helical; Signal-anchor for type III membrane protein membrane pass occupies residues 53–73 (IIPVYCALLATVVLGLLAYVA). At 74 to 228 (FKCWRSRKQR…SSPAEGCSVV (155 aa)) the chain is on the cytoplasmic side. A Death domain is found at 143-222 (EEVQRLLILG…DVVQVLSSPA (80 aa)).

As to quaternary structure, interacts with NTRK1. Isoform 1 and isoform 2 interact with NGFR. Interacts with SORT1. In terms of processing, isoform 1 is N-glycosylated. Isoform 2 is not N-glycosylated. In terms of tissue distribution, detected in embryo, including embryonic brain. Detected at very low levels in adult testis, spleen, thymus and lung.

It localises to the cell membrane. The protein localises to the nucleus. Modulates NTRK1 signaling. Can activate several intracellular signaling pathways, leading to activation of JUN. Promotes translocation of SORT1 to the cell membrane, and thereby hinders lysosomal degradation of SOTR1 and promotes its interaction with NGFR. Both isoform 1 and isoform 2 promote apoptosis. This chain is Death domain-containing membrane protein NRADD (Nradd), found in Rattus norvegicus (Rat).